The primary structure comprises 745 residues: Centromere protein I (745 aa).

The segment covering 1-27 (MATPRLTRNSQQQNRISQGSNSRQTTL) has biased composition (polar residues). Positions 1-58 (MATPRLTRNSQQQNRISQGSNSRQTTLLDWKVKDKAGNSKSVLEESSSLEDSNHADDQ) are disordered. The span at 39-50 (SKSVLEESSSLE) shows a compositional bias: low complexity.

The protein belongs to the CENP-I/CTF3 family. As to quaternary structure, component of the CENPA-CAD complex, composed of CENPI, CENPK, CENPL, CENPO, CENPP, CENPQ, CENPR and CENPS. The CENPA-CAD complex interacts with the CENPA-NAC complex, at least composed of CENPA, CENPC, CENPH, CENPM, CENPN, CENPT and CENPU. Interacts with SENP6. In terms of processing, sumoylated. Sumoylated form can be polyubiquitinated by RNF4, leading to its degradation. Desumoylation by SENP6 prevents its degradation. Highly expressed in testis, ovary and spleen. A much lower mRNA level is found in brain and lung, and no expression is detected in liver, kidney, heart, muscle, pituitary gland, prostate, epididymis and seminal vesicle.

Its subcellular location is the nucleus. It is found in the chromosome. It localises to the centromere. Its function is as follows. Component of the CENPA-CAD (nucleosome distal) complex, a complex recruited to centromeres which is involved in assembly of kinetochore proteins, mitotic progression and chromosome segregation. May be involved in incorporation of newly synthesized CENPA into centromeres via its interaction with the CENPA-NAC complex. Required for the localization of CENPF, MAD1L1 and MAD2 (MAD2L1 or MAD2L2) to kinetochores. Involved in the response of gonadal tissues to follicle-stimulating hormone. The chain is Centromere protein I (Cenpi) from Rattus norvegicus (Rat).